The following is a 496-amino-acid chain: Cobyric acid synthase (496 aa).

Positions 257 to 447 constitute a GATase cobBQ-type domain; the sequence is KINVAIILLK…MHGILDNPAV (191 aa). Residue cysteine 338 is the Nucleophile of the active site. Histidine 439 is an active-site residue.

Belongs to the CobB/CobQ family. CobQ subfamily.

Its pathway is cofactor biosynthesis; adenosylcobalamin biosynthesis. Catalyzes amidations at positions B, D, E, and G on adenosylcobyrinic A,C-diamide. NH(2) groups are provided by glutamine, and one molecule of ATP is hydrogenolyzed for each amidation. In Parabacteroides distasonis (strain ATCC 8503 / DSM 20701 / CIP 104284 / JCM 5825 / NCTC 11152), this protein is Cobyric acid synthase.